Reading from the N-terminus, the 646-residue chain is Chaperone protein DnaK (646 aa).

Threonine 197 is modified (phosphothreonine; by autocatalysis). The segment at glutamine 599–lysine 646 is disordered. A compositionally biased stretch (polar residues) spans alanine 610 to lysine 628. Residues aspartate 633–lysine 646 show a composition bias toward acidic residues.

The protein belongs to the heat shock protein 70 family.

In terms of biological role, acts as a chaperone. The chain is Chaperone protein DnaK from Treponema denticola (strain ATCC 35405 / DSM 14222 / CIP 103919 / JCM 8153 / KCTC 15104).